Reading from the N-terminus, the 479-residue chain is Ribosomal RNA small subunit methyltransferase F (479 aa).

S-adenosyl-L-methionine contacts are provided by residues 125–131, E149, D176, and D194; that span reads AAAPGSK. C247 acts as the Nucleophile in catalysis.

This sequence belongs to the class I-like SAM-binding methyltransferase superfamily. RsmB/NOP family.

It is found in the cytoplasm. It catalyses the reaction cytidine(1407) in 16S rRNA + S-adenosyl-L-methionine = 5-methylcytidine(1407) in 16S rRNA + S-adenosyl-L-homocysteine + H(+). Specifically methylates the cytosine at position 1407 (m5C1407) of 16S rRNA. The protein is Ribosomal RNA small subunit methyltransferase F of Escherichia coli (strain SMS-3-5 / SECEC).